The chain runs to 412 residues: MADGEGGWWGGWLTQSFQSVKDKSAEAYEFIKRDLTEFSSVVQHDTACSVVATANAIKSKLAVEGSSETTEKVKKGITNILGVITDTLAPPPDKTIDCDVITLVATPTGTTEVYDSGKARLYSLQADPATYCNEPDGPPQQFDSWLSTFSLEERKAEISELLVSSPAIRALYTKMVPAAVAHAEFWQRYFYKVFQLEQEEARRVALKQRAEQTDHSESLGWEEEDEEGEFLGATSLSRLDFTPPVEESRVPAVTVADTPESSSPPQAVASLSNVASDVTPSVSSDSVSFPTQIENQAESVTIRVTQPSPAADELSQKLSDTGLQETFPEERPAPREETAREDMAQDLRVFELNSDSGKSTPSNNGKKGSSTDVSEDWEKDFDLDMTEEEVQMALSKVDATEELEDEDWENWE.

Residues 145-197 (WLSTFSLEERKAEISELLVSSPAIRALYTKMVPAAVAHAEFWQRYFYKVFQLE) form the BSD domain. A compositionally biased stretch (basic and acidic residues) spans 208 to 217 (QRAEQTDHSE). 3 disordered regions span residues 208-227 (QRAE…EDEE), 253-272 (VTVA…ASLS), and 298-412 (ESVT…ENWE). Polar residues-rich tracts occupy residues 259 to 272 (PESS…ASLS) and 298 to 308 (ESVTIRVTQPS). Ser-308 bears the Phosphoserine mark. Residues 328 to 349 (PEERPAPREETAREDMAQDLRV) show a composition bias toward basic and acidic residues. A compositionally biased stretch (polar residues) spans 353–372 (NSDSGKSTPSNNGKKGSSTD). Composition is skewed to acidic residues over residues 373–390 (VSED…EEEV) and 400–412 (TEEL…ENWE).

The sequence is that of BSD domain-containing protein 1 (bsdc1) from Danio rerio (Zebrafish).